Consider the following 361-residue polypeptide: Phosphoserine aminotransferase (361 aa).

Residue arginine 42 participates in L-glutamate binding. Pyridoxal 5'-phosphate-binding positions include 76–77 (AT), tryptophan 102, threonine 152, aspartate 172, and glutamine 195. Residue lysine 196 is modified to N6-(pyridoxal phosphate)lysine. A pyridoxal 5'-phosphate-binding site is contributed by 237 to 238 (NT).

It belongs to the class-V pyridoxal-phosphate-dependent aminotransferase family. SerC subfamily. Homodimer. Pyridoxal 5'-phosphate serves as cofactor.

It is found in the cytoplasm. The catalysed reaction is O-phospho-L-serine + 2-oxoglutarate = 3-phosphooxypyruvate + L-glutamate. It catalyses the reaction 4-(phosphooxy)-L-threonine + 2-oxoglutarate = (R)-3-hydroxy-2-oxo-4-phosphooxybutanoate + L-glutamate. Its pathway is amino-acid biosynthesis; L-serine biosynthesis; L-serine from 3-phospho-D-glycerate: step 2/3. The protein operates within cofactor biosynthesis; pyridoxine 5'-phosphate biosynthesis; pyridoxine 5'-phosphate from D-erythrose 4-phosphate: step 3/5. Functionally, catalyzes the reversible conversion of 3-phosphohydroxypyruvate to phosphoserine and of 3-hydroxy-2-oxo-4-phosphonooxybutanoate to phosphohydroxythreonine. This Xanthomonas campestris pv. campestris (strain 8004) protein is Phosphoserine aminotransferase.